The sequence spans 64 residues: Large ribosomal subunit protein bL35 (64 aa).

Disordered stretches follow at residues 1-22 (MPKAKTHSGASKRFRRTGTGKI) and 34-64 (EHKPSTRTRRLDGHTRVSANDTQRVNSLLNG). Positions 34–48 (EHKPSTRTRRLDGHT) are enriched in basic and acidic residues. Residues 50–64 (VSANDTQRVNSLLNG) show a composition bias toward polar residues.

It belongs to the bacterial ribosomal protein bL35 family.

In Mycobacterium leprae (strain Br4923), this protein is Large ribosomal subunit protein bL35.